We begin with the raw amino-acid sequence, 96 residues long: (4S)-4-hydroxy-5-phosphonooxypentane-2,3-dione isomerase (96 aa).

Residues 2-91 (HVTLVEINVK…MTGPRKKTTF (90 aa)) enclose the ABM domain.

It belongs to the LsrG family. As to quaternary structure, homodimer.

It is found in the cytoplasm. It catalyses the reaction (2S)-2-hydroxy-3,4-dioxopentyl phosphate = 3-hydroxy-2,4-dioxopentyl phosphate. In terms of biological role, involved in the degradation of phospho-AI-2, thereby terminating induction of the lsr operon and closing the AI-2 signaling cycle. Catalyzes the conversion of (4S)-4-hydroxy-5-phosphonooxypentane-2,3-dione (P-DPD) to 3-hydroxy-5-phosphonooxypentane-2,4-dione (P-HPD). The chain is (4S)-4-hydroxy-5-phosphonooxypentane-2,3-dione isomerase from Yersinia enterocolitica serotype O:8 / biotype 1B (strain NCTC 13174 / 8081).